The sequence spans 61 residues: uncharacterized protein (61 aa).

2 helical membrane-spanning segments follow: residues 7–24 (FNVF…YKLF) and 29–48 (VSTT…IVGL).

The protein resides in the cell membrane. This is an uncharacterized protein from Bacillus subtilis (strain 168).